The sequence spans 167 residues: HTH-type transcriptional repressor IacR (167 aa).

A compositionally biased stretch (polar residues) spans 1–10 (MSNAKNTSAA). The segment at 1–25 (MSNAKNTSAASPARKGHSHHDPASD) is disordered. Positions 30–162 (EDFPFYWLAR…LNRMLEVVFH (133 aa)) constitute an HTH marR-type domain. A DNA-binding region (H-T-H motif) is located at residues 76-99 (ISEISTHAIAKLSTITKIVYRMKE).

With respect to regulation, exposure to indole-3-acetic acid (IAA) probably relieves the repressor activity. In terms of biological role, probably acts as a repressor of iacA expression. This is HTH-type transcriptional repressor IacR from Pseudomonas putida (Arthrobacter siderocapsulatus).